Here is a 1373-residue protein sequence, read N- to C-terminus: MSACSDFVEHIWKPGSCKNCFCLRSDHQPTAGHPKARANSLPAGTRLPARPENCRLDDEGVNGLAYSKPTIAVKPTMMTSETSDLWTEASLSAEVPKVNWRRTPGKLLLPKQEDEPIVYLGSFRGLQKPASPLACTDGNSRCPPAYTMVGLHNLEARVDRNTAFQPVSFQEEKAGREELPSAHESFRQKLAAFAGMTSSCPKGPRPCTSPQPLRESLPSEDDSDQRCSPSGDSEGGEYCSILDCCPESKDAVHSTEGSGRRGGDCSPTCREQGPRTRPTEEEKQGLSFPRECCGQGSTANPPRLGPKKPSLNSEAASSSDGLSCGSSRSGASSPFAPHLENDYCSLVKEPASGKQQDLSGHFLTSGKCVGQAAELQPASLLRDPVQPEPIYAESAKRKKAAPGPPRPEPKKEQVPAGHSQGQVWTGDTWIQKTPPSWSQDREGANPAPQVATTITVIAAHPEEDHRTIYLSSPDSAVGVQWPRGPSNQDLQAGEEEPLVAQGLTSRESHPHNVTENTAKEKPAIPPKLSKSSPGGSPVSPAPPLTDHSDGNTGGSSVGPQLLSRVPANLTSSCHTNGVATAGDSAKCPPPATSSSVLDQRRPRYQTGAWSRQCRIEEEEEVGQELSQSWGRELENGTADHSNSSTWHRLHPIDGTSGQNSKTNSGMSKSASFAFEFPKDRGRLEAFSPPPPPPKSRHLLKMNKSSSDLEKVSQSSAESLSPSFRGAHVSFTTGSTDSLASDSRPCSDGGPSYEPTHSPTISGKKLFAPVPFPSGSTEDVSPGGGPAQPPPLPQKKIVSRAASSPDGFFWTQGSPKPRTASPKLNLSHSETNVCAHDEPPFNCSLNSGNRSHHVFSSSEPLGKAFKGNAPWAPALGLANSKGGCGSPSLQCRAATSTSSSQLSVSSQASSSSTQLQLHSLLSSISSKEGTYAKLGGLYTQSLARLVTKCEDLFMGGQKKELRFNENYWSLFKLTCNKPCCDSGDAIYYCATCSEDPGSIYAVKICKTPEPKSASYCSPSVPVHFNIQQDCGHFVASVPSSMLASPDTSSKDTAPAVSPQPPAQEQDCVVVITREVPHQTASDFVRDSMASHRAEPEVYERRVCFLLLQLCNGLEHLKEHGIIHRDLCLENLLLAHCNPQSSPGPSATPTVPTTTSRCPSAAPAATTACQGGPGEKQLPRLIISNFLKAKQKPGGTTNLQQKKSQARLAPEIVSASQYRKFDEFQTGILIYELLHQPNPFEVRAQLRERDYRREDLPPLPTLSLYSPGLQQLAHLLLEADPIKRIRIGEAKRVLQCLLWGPRRELVEQPCTSEEVLCNTLHNWIDMKRALMMMKFAEKAVDRRRGVELEDWLCCQYLASAEPGALLQSLKLLQLL.

Disordered regions lie at residues 31–50 (AGHPKARANSLPAGTRLPAR) and 197–235 (TSSCPKGPRPCTSPQPLRESLPSEDDSDQRCSPSGDSEG). Tyr238 carries the phosphotyrosine modification. Basic and acidic residues-rich tracts occupy residues 250–263 (DAVHSTEGSGRRGG) and 272–284 (QGPRTRPTEEEKQ). A disordered region spans residues 250-338 (DAVHSTEGSG…SGASSPFAPH (89 aa)). Low complexity predominate over residues 317–333 (SSSDGLSCGSSRSGASS). 2 positions are modified to phosphotyrosine: Tyr343 and Tyr391. 2 disordered regions span residues 376–448 (QPAS…NPAP) and 468–794 (IYLS…LPQK). A compositionally biased stretch (polar residues) spans 419–438 (SQGQVWTGDTWIQKTPPSWS). A compositionally biased stretch (basic and acidic residues) spans 506–522 (RESHPHNVTENTAKEKP). The segment covering 526 to 538 (PKLSKSSPGGSPV) has biased composition (low complexity). Polar residues-rich tracts occupy residues 568 to 578 (NLTSSCHTNGV) and 655 to 670 (TSGQNSKTNSGMSKSA). A phosphoserine mark is found at Ser671 and Ser720. Polar residues-rich tracts occupy residues 711-721 (VSQSSAESLSP) and 729-740 (SFTTGSTDSLAS). Phosphoserine occurs at positions 757 and 802. The segment at 804-823 (PDGFFWTQGSPKPRTASPKL) is disordered. Residues 911-954 (STQLQLHSLLSSISSKEGTYAKLGGLYTQSLARLVTKCEDLFMG) form a required for homodimerization region. The region spanning 945–1296 (VTKCEDLFMG…EAKRVLQCLL (352 aa)) is the Protein kinase domain. Residues 1041-1050 (LASPDTSSKD) show a composition bias toward polar residues. Disordered stretches follow at residues 1041-1062 (LASPDTSSKDTAPAVSPQPPAQ) and 1138-1171 (QSSPGPSATPTVPTTTSRCPSAAPAATTACQGGP). Low complexity predominate over residues 1139 to 1167 (SSPGPSATPTVPTTTSRCPSAAPAATTAC). Residues 1298-1373 (GPRRELVEQP…LQSLKLLQLL (76 aa)) form a required for homodimerization region.

Belongs to the protein kinase superfamily. Homodimer. Dimerization leads to the catalytic activation of CSK. Interacts (via C-terminus) with RND2. Interacts with CSK (via SH2 domain) in a Tyr-391 phosphorylation-dependent manner; this interaction potentiates kinase activity of CSK. Interacts with NOTCH1 intracellular domain (N1ICD). Forms a complex with PRAG1, N1ICD and MAML1, in a MAML1-dependent manner. Post-translationally, phosphorylated by CSK on Tyr-238, Tyr-343, and Tyr-391; Tyr-391 is a primary site of phosphorylation.

The protein localises to the cytoplasm. The protein resides in the nucleus. It is found in the cell junction. Its subcellular location is the focal adhesion. Catalytically inactive protein kinase that acts as a scaffold protein. Functions as an effector of the small GTPase RND2, which stimulates RhoA activity and inhibits NGF-induced neurite outgrowth. Promotes Src family kinase (SFK) signaling by regulating the subcellular localization of CSK, a negative regulator of these kinases, leading to the regulation of cell morphology and motility by a CSK-dependent mechanism. Acts as a critical coactivator of Notch signaling. This chain is Inactive tyrosine-protein kinase PRAG1, found in Mus musculus (Mouse).